Here is a 689-residue protein sequence, read N- to C-terminus: DNA polymerase epsilon subunit B (689 aa).

A compositionally biased stretch (basic and acidic residues) spans 98 to 115; sequence EWSHEHPIQHEENILGRT. A disordered region spans residues 98 to 155; that stretch reads EWSHEHPIQHEENILGRTDDDENNSDDEMPIAADSSLQNVSLSSPMRQPTERDEYKQP. The segment covering 116–126 has biased composition (acidic residues); it reads DDDENNSDDEM. The residue at position 122 (Ser122) is a Phosphoserine. Positions 132-144 are enriched in polar residues; that stretch reads SSLQNVSLSSPMR. Residue Ser141 is modified to Phosphoserine; by CDC28. Over residues 146-155 the composition is skewed to basic and acidic residues; it reads PTERDEYKQP. The residue at position 613 (Ser613) is a Phosphoserine.

This sequence belongs to the DNA polymerase epsilon subunit B family. DNA polymerase epsilon is a heterotetramer consisting of POL2, DPB2, DPB3 and DPB4. Phosphorylated in a cell cycle dependent manner during late G1 phase. Phosphorylation may facilitate the interaction with POL2 or the activity of DNA polymerase II. Phosphorylation is independent of DNA replication but dependent upon CDC28 in vivo. Both Ser-141 and Ser-613 are phosphorylated in vivo, but in vitro only Ser-141 is phosphorylated by CDC28.

It localises to the cytoplasm. The protein resides in the nucleus. In terms of biological role, as accessory component of the DNA polymerase epsilon complex participates in chromosomal DNA replication. It is required during synthesis of the leading and lagging DNA strands at the replication fork and binds at/or near replication origins and moves along DNA with the replication fork. It has 3'-5' proofreading exonuclease activity that correct errors arising during DNA replication. It is also involved in DNA synthesis during DNA repair. This chain is DNA polymerase epsilon subunit B (DPB2), found in Saccharomyces cerevisiae (strain ATCC 204508 / S288c) (Baker's yeast).